The primary structure comprises 275 residues: NH(3)-dependent NAD(+) synthetase (275 aa).

50–57 (GISGGVDS) contacts ATP. D56 contributes to the Mg(2+) binding site. R147 serves as a coordination point for deamido-NAD(+). An ATP-binding site is contributed by T167. E172 lines the Mg(2+) pocket. 2 residues coordinate deamido-NAD(+): K180 and D187. 2 residues coordinate ATP: K196 and T218. 267–268 (HK) is a binding site for deamido-NAD(+).

This sequence belongs to the NAD synthetase family. In terms of assembly, homodimer.

It catalyses the reaction deamido-NAD(+) + NH4(+) + ATP = AMP + diphosphate + NAD(+) + H(+). Its pathway is cofactor biosynthesis; NAD(+) biosynthesis; NAD(+) from deamido-NAD(+) (ammonia route): step 1/1. Its function is as follows. Catalyzes the ATP-dependent amidation of deamido-NAD to form NAD. Uses ammonia as a nitrogen source. The protein is NH(3)-dependent NAD(+) synthetase of Pseudomonas savastanoi pv. phaseolicola (strain 1448A / Race 6) (Pseudomonas syringae pv. phaseolicola (strain 1448A / Race 6)).